The chain runs to 440 residues: GTPase Der (440 aa).

2 EngA-type G domains span residues 4–168 and 177–352; these read PIVA…PENK and IKVA…NQRA. GTP-binding positions include 10-17, 57-61, 120-123, 183-190, 230-234, and 295-298; these read GRPNVGKS, DTGGI, NKVD, GKPNVGKS, DTAGL, and NKWD. One can recognise a KH-like domain in the interval 353–437; it reads MRVPTGGLNE…PIRFIYREKS (85 aa).

Belongs to the TRAFAC class TrmE-Era-EngA-EngB-Septin-like GTPase superfamily. EngA (Der) GTPase family. In terms of assembly, associates with the 50S ribosomal subunit.

In terms of biological role, GTPase that plays an essential role in the late steps of ribosome biogenesis. This Alkaliphilus metalliredigens (strain QYMF) protein is GTPase Der.